A 426-amino-acid polypeptide reads, in one-letter code: Lipoyl synthase, mitochondrial (426 aa).

A mitochondrion-targeting transit peptide spans 1–29 (MASPAPLQRLQAPLRRSLARAAVLSSRTY). Over residues 27-42 (RTYATIPSPSDPGLTQ) the composition is skewed to polar residues. Positions 27-61 (RTYATIPSPSDPGLTQSSPSPAASTTPAKKAPRPS) are disordered. The segment covering 43 to 55 (SSPSPAASTTPAK) has biased composition (low complexity). [4Fe-4S] cluster-binding residues include Cys140, Cys145, Cys151, Cys171, Cys175, Cys178, and Ser388. The Radical SAM core domain maps to 154–377 (GNDKSAATAT…KQRALDMGFL (224 aa)).

This sequence belongs to the radical SAM superfamily. Lipoyl synthase family. It depends on [4Fe-4S] cluster as a cofactor.

The protein resides in the mitochondrion. The enzyme catalyses [[Fe-S] cluster scaffold protein carrying a second [4Fe-4S](2+) cluster] + N(6)-octanoyl-L-lysyl-[protein] + 2 oxidized [2Fe-2S]-[ferredoxin] + 2 S-adenosyl-L-methionine + 4 H(+) = [[Fe-S] cluster scaffold protein] + N(6)-[(R)-dihydrolipoyl]-L-lysyl-[protein] + 4 Fe(3+) + 2 hydrogen sulfide + 2 5'-deoxyadenosine + 2 L-methionine + 2 reduced [2Fe-2S]-[ferredoxin]. Its pathway is protein modification; protein lipoylation via endogenous pathway; protein N(6)-(lipoyl)lysine from octanoyl-[acyl-carrier-protein]: step 2/2. Its function is as follows. Catalyzes the radical-mediated insertion of two sulfur atoms into the C-6 and C-8 positions of the octanoyl moiety bound to the lipoyl domains of lipoate-dependent enzymes, thereby converting the octanoylated domains into lipoylated derivatives. This is Lipoyl synthase, mitochondrial from Podospora anserina (strain S / ATCC MYA-4624 / DSM 980 / FGSC 10383) (Pleurage anserina).